The primary structure comprises 188 residues: Elongation factor P (188 aa).

The protein belongs to the elongation factor P family.

It localises to the cytoplasm. Its pathway is protein biosynthesis; polypeptide chain elongation. Functionally, involved in peptide bond synthesis. Stimulates efficient translation and peptide-bond synthesis on native or reconstituted 70S ribosomes in vitro. Probably functions indirectly by altering the affinity of the ribosome for aminoacyl-tRNA, thus increasing their reactivity as acceptors for peptidyl transferase. This Caulobacter sp. (strain K31) protein is Elongation factor P.